Reading from the N-terminus, the 502-residue chain is Protein DETOXIFICATION 7 (502 aa).

The next 12 membrane-spanning stretches (helical) occupy residues 36–56 (MAAPMVAVSVSQFLLQVISMV), 68–88 (AVAIATSLTNVTGFSLIVGFA), 112–132 (YSSMLCLLVFCFSISIVWFFM), 143–163 (PLISQLACRYSIWLIPALFGF), 182–202 (LFVSSLGALCFHIPFCWLLVY), 208–228 (IVGAALSIGFSYWLNVFLLWI), 262–282 (AMMICLEWWSFEILLLMSGLL), 291–311 (VISICLTTSAVHFVLVNAIGA), 331–351 (AAVNSAIFLGGVGALITTITL), 375–395 (ITPILCLSIFVNSFLAVLSGV), 408–428 (ASLGSYYLVGIPLGWFLCFVM), and 436–456 (WIGILIASTIQLIVFALVTFF).

Belongs to the multi antimicrobial extrusion (MATE) (TC 2.A.66.1) family.

It localises to the membrane. This is Protein DETOXIFICATION 7 from Arabidopsis thaliana (Mouse-ear cress).